A 371-amino-acid chain; its full sequence is Putative RNA-binding protein Luc7-like 1 (371 aa).

Coiled coils occupy residues 87-177 (MDHL…RNSM) and 220-256 (QIREKLDQLRKTVAEKQEKRNQDRLRRREEREREERL). Residues 232–257 (VAEKQEKRNQDRLRRREEREREERLG) show a composition bias toward basic and acidic residues. The tract at residues 232-371 (VAEKQEKRNQ…RSEEKEAGEI (140 aa)) is disordered. Over residues 258 to 317 (RRSGSRTRDRRRSRSRDRRRRRSRSTSRERRKFSRSRSRDRYRRHRSRSRSHSRGHRRAS) the composition is skewed to basic residues. Basic and acidic residues-rich tracts occupy residues 318–351 (RDRSTKYKFSRERSLREESWEYGRNERGPTDWRL) and 361–371 (RRSEEKEAGEI). Residues S336 and S363 each carry the phosphoserine modification.

It belongs to the Luc7 family.

Its function is as follows. May bind to RNA via its Arg/Ser-rich domain. The polypeptide is Putative RNA-binding protein Luc7-like 1 (Luc7l) (Mus musculus (Mouse)).